The chain runs to 205 residues: Glutathione peroxidase 1 (205 aa).

At Ser-37 the chain carries Phosphoserine. Sec-52 is an active-site residue. Sec-52 is a non-standard amino acid (selenocysteine). Lys-91 and Lys-117 each carry N6-acetyllysine; alternate. Lys-91 and Lys-117 each carry N6-succinyllysine; alternate. Lys-117 carries an N-linked (Glc) (glycation) lysine; in vitro glycan. Lys-124 is modified (N6-acetyllysine). Position 151 is an N6-acetyllysine; alternate (Lys-151). An N6-succinyllysine; alternate modification is found at Lys-151. Residues Ser-200 and Ser-204 each carry the phosphoserine modification.

The protein belongs to the glutathione peroxidase family. Homotetramer. Interacts with MIEN1. During periods of oxidative stress, Sec-52 may react with a superoxide radical, irreversibly lose hydroselenide and be converted to dehydroalanine.

The protein localises to the cytoplasm. Its subcellular location is the mitochondrion. The enzyme catalyses 2 glutathione + H2O2 = glutathione disulfide + 2 H2O. It catalyses the reaction a hydroperoxy polyunsaturated fatty acid + 2 glutathione = a hydroxy polyunsaturated fatty acid + glutathione disulfide + H2O. The catalysed reaction is tert-butyl hydroperoxide + 2 glutathione = tert-butanol + glutathione disulfide + H2O. It carries out the reaction cumene hydroperoxide + 2 glutathione = 2-phenylpropan-2-ol + glutathione disulfide + H2O. The enzyme catalyses (13S)-hydroperoxy-(9Z,11E)-octadecadienoate + 2 glutathione = (13S)-hydroxy-(9Z,11E)-octadecadienoate + glutathione disulfide + H2O. It catalyses the reaction (9S)-hydroperoxy-(10E,12Z)-octadecadienoate + 2 glutathione = (9S)-hydroxy-(10E,12Z)-octadecadienoate + glutathione disulfide + H2O. The catalysed reaction is (5S)-hydroperoxy-(6E,8Z,11Z,14Z)-eicosatetraenoate + 2 glutathione = (5S)-hydroxy-(6E,8Z,11Z,14Z)-eicosatetraenoate + glutathione disulfide + H2O. It carries out the reaction (12S)-hydroperoxy-(5Z,8Z,10E,14Z)-eicosatetraenoate + 2 glutathione = (12S)-hydroxy-(5Z,8Z,10E,14Z)-eicosatetraenoate + glutathione disulfide + H2O. The enzyme catalyses (12R)-hydroperoxy-(5Z,8Z,10E,14Z)-eicosatetraenoate + 2 glutathione = (12R)-hydroxy-(5Z,8Z,10E,14Z)-eicosatetraenoate + glutathione disulfide + H2O. It catalyses the reaction (15S)-hydroperoxy-(5Z,8Z,11Z,13E)-eicosatetraenoate + 2 glutathione = (15S)-hydroxy-(5Z,8Z,11Z,13E)-eicosatetraenoate + glutathione disulfide + H2O. The catalysed reaction is (5S)-hydroperoxy-(6E,8Z,11Z,14Z,17Z)-eicosapentaenoate + 2 glutathione = (5S)-hydroxy-(6E,8Z,11Z,14Z,17Z)-eicosapentaenoate + glutathione disulfide + H2O. It carries out the reaction (15S)-hydroperoxy-(5Z,8Z,11Z,13E,17Z)-eicosapentaenoate + 2 glutathione = (15S)-hydroxy-(5Z,8Z,11Z,13E,17Z)-eicosapentaenoate + glutathione disulfide + H2O. The enzyme catalyses (15S)-hydroperoxy-(11Z,13E)-eicosadienoate + 2 glutathione = (15S)-hydroxy-(11Z,13E)-eicosadienoate + glutathione disulfide + H2O. It catalyses the reaction (17S)-hydroperoxy-(4Z,7Z,10Z,13Z,15E,19Z)-docosahexaenoate + 2 glutathione = (17S)-hydroxy-(4Z,7Z,10Z,13Z,15E,19Z)-docosahexaenoate + glutathione disulfide + H2O. In terms of biological role, catalyzes the reduction of hydroperoxides in a glutathione-dependent manner thus regulating cellular redox homeostasis. Can reduce small soluble hydroperoxides such as H2O2, cumene hydroperoxide and tert-butyl hydroperoxide, as well as several fatty acid-derived hydroperoxides. In platelets catalyzes the reduction of 12-hydroperoxyeicosatetraenoic acid, the primary product of the arachidonate 12-lipoxygenase pathway. This is Glutathione peroxidase 1 (GPX1) from Bos taurus (Bovine).